The primary structure comprises 636 residues: Ketocytochalasin monooxygenase (636 aa).

Residues Asp125, 133–136 (TWYW), Asp145, Tyr151, and Ile195 contribute to the FAD site. 143-145 (ACD) contributes to the NADP(+) binding site. Residues 279–285 (TGASAVQ), 302–303 (RT), and 420–421 (KR) each bind NADP(+). Trp534 provides a ligand contact to FAD.

This sequence belongs to the FAD-binding monooxygenase family. It depends on FAD as a cofactor.

It catalyses the reaction ketocytochalasin + NADPH + O2 + H(+) = iso-precytochalasin + NADP(+) + H2O. The catalysed reaction is iso-precytochalasin + NADPH + O2 + H(+) = cytochalasin Z16 + NADP(+) + H2O. It participates in mycotoxin biosynthesis. Ketocytochalasin monooxygenase; part of the gene cluster that mediates the biosynthesis of a family of the mycotoxins cytochalasins E and K. The hybrid PKS-NRPS synthetase ccsA and the enoyl reductase ccsC are responsible for fusion of phenylalanine with an octaketide backbone and subsequent release of the stable tetramic acid precursor. The polyketide synthase module (PKS) of the PKS-NRPS ccsA is responsible for the synthesis of the octaketide backbone. The downstream nonribosomal peptide synthetase (NRPS) amidates the carboxyl end of the octaketide with a phenylalanine. A reductase-like domain (R) at the C-terminus catalyzes the reductive release of the polyketide-amino acid intermediate. Because ccsA lacks a designated enoylreductase (ER) domain, the required activity is provided the enoyl reductase ccsC. Upon formation of the 11-membered carbocycle-fused perhydroisoindolone intermediate, a number of oxidative steps are required to afford the final cytochalasin E and K, including two hydroxylations at C17 and C18, one alcohol oxidation at C17, one epoxidation at C6 and C7 and two Baeyer-Villiger oxidations. The oxidative modification at C17, C18 and the C6-C7 epoxidation are likely to be catalyzed by the two cytochrome P450 oxygenases ccsD and ccsG. CcsD may be responsible for the epoxidation of the C6-C7 double bond. CcsG may be responsible for the successive oxidative modifications at C17 and C18. The double Baeyer-Villiger oxidations of ketocytochalasin to precytochalasin and cytochalasin Z(16) are among the final steps leading to cytochalasin E and K and are catalyzed by ccsB. The first oxygen insertion step follows that of the classic BVMO mechanism, generating the ester precytochalasin. Release of precytochalasin into an aqueous environment can generate the shunt product iso-precytochalasin through spontaneous isomerization. Alternatively, precytochalasin can undergo further oxidation by ccsB to yield the in-line carbonate-containing cytochalasin Z(16). Cytochalasin Z(16) is a precursor to cytochalasin E and cytochalasin K, whereas iso-precytochalasin is a precursor to cytochalasin Z(17) and rosellichalasin. The hydrolyase ccsE may catalyze hydrolysis of epoxide bond in cytochalasin E to afford cytochalasin K. The function of ccsF has not been assigned but it may play a role in post-PKS-NRPS biosynthetic step, resistance or transport of cytochalasins and related PKS-NRPS products. The sequence is that of Ketocytochalasin monooxygenase from Aspergillus clavatus (strain ATCC 1007 / CBS 513.65 / DSM 816 / NCTC 3887 / NRRL 1 / QM 1276 / 107).